A 666-amino-acid chain; its full sequence is 7SK snRNA methylphosphate capping enzyme (666 aa).

N-acetylmethionine is present on methionine 1. The span at 1–10 (MIEMAAEKEP) shows a compositional bias: basic and acidic residues. A disordered region spans residues 1-141 (MIEMAAEKEP…GSGGSFKHPA (141 aa)). Positions 50–61 (GPGPRAHSAGAA) are enriched in low complexity. At serine 57 the chain carries Phosphoserine. Arginine 91 carries the post-translational modification Omega-N-methylarginine. Phosphoserine is present on residues serine 126, serine 150, and serine 154. The residue at position 188 (threonine 188) is a Phosphothreonine. 3 positions are modified to phosphoserine: serine 191, serine 192, and serine 229. Over residues 235–244 (RKRHRHRGPH) the composition is skewed to basic residues. The tract at residues 235–291 (RKRHRHRGPHHQQQQQASGGNDSNAAVLPTDPLTPSLHGEGATQQQQNRGQNRDAPQ) is disordered. A compositionally biased stretch (low complexity) spans 245-254 (HQQQQQASGG). Threonine 268 carries the post-translational modification Phosphothreonine. Phosphoserine is present on residues serine 307 and serine 321. A compositionally biased stretch (low complexity) spans 309–337 (LPSALQGSSGSLSAPPAASVTSAPSTSSS). Residues 309–383 (LPSALQGSSG…HHHPLPATGF (75 aa)) are disordered. Positions 338–347 (SRHRKRRRTS) are enriched in basic residues. Residue serine 368 is modified to Phosphoserine. Residues tyrosine 399, arginine 410, 428 to 430 (GCN), 451 to 452 (DI), 536 to 537 (NY), and phenylalanine 558 contribute to the S-adenosyl-L-methionine site. Residues 408 to 663 (DVRLRVLKPE…PVYLFHKARS (256 aa)) enclose the Bin3-type SAM domain. Lysine 620 participates in a covalent cross-link: Glycyl lysine isopeptide (Lys-Gly) (interchain with G-Cter in SUMO2).

Belongs to the methyltransferase superfamily. As to quaternary structure, core component of the 7SK RNP complex, at least composed of 7SK RNA, LARP7, MEPCE, HEXIM1 (or HEXIM2) and P-TEFb (composed of CDK9 and CCNT1/cyclin-T1). Interacts with METTL16. Interacts with RBM7; upon genotoxic stress this interaction is enhanced, triggering the release of inactive P-TEFb complex from the core, yielding to P-TEFb complex activation. Post-translationally, dephosphorylated at Ser-126 by the PNUTS-PP1 complex, promoting RNA polymerase II transcription pause-release.

It localises to the nucleus. It carries out the reaction a 5'-end triphospho-guanosine-ribonucleotide-snRNA + S-adenosyl-L-methionine = a 5'-end methyltriphosphate-guanosine-ribonucleotide-snRNA + S-adenosyl-L-homocysteine. S-adenosyl-L-methionine-dependent methyltransferase that adds a methylphosphate cap at the 5'-end of 7SK snRNA (7SK RNA), leading to stabilize it. Also has a non-enzymatic function as part of the 7SK RNP complex: the 7SK RNP complex sequesters the positive transcription elongation factor b (P-TEFb) in a large inactive 7SK RNP complex preventing RNA polymerase II phosphorylation and subsequent transcriptional elongation. The 7SK RNP complex also promotes snRNA gene transcription by RNA polymerase II via interaction with the little elongation complex (LEC). In the 7SK RNP complex, MEPCE is required to stabilize 7SK RNA and facilitate the assembly of 7SK RNP complex. MEPCE has a non-enzymatic function in the 7SK RNP complex; it has a non-enzymatic function; interaction with LARP7 within the 7SK RNP complex occluding its catalytic center. Also required for stability of U6 snRNAs. The sequence is that of 7SK snRNA methylphosphate capping enzyme from Mus musculus (Mouse).